Consider the following 178-residue polypeptide: Oligoribonuclease (178 aa).

Positions 7 to 168 (LIWIDLEMTG…DDIRESIAEL (162 aa)) constitute an Exonuclease domain. Residue tyrosine 128 is part of the active site.

This sequence belongs to the oligoribonuclease family.

The protein localises to the cytoplasm. Its function is as follows. 3'-to-5' exoribonuclease specific for small oligoribonucleotides. This Pseudomonas syringae pv. tomato (strain ATCC BAA-871 / DC3000) protein is Oligoribonuclease.